The following is a 162-amino-acid chain: Peptidyl-prolyl cis-trans isomerase (162 aa).

The region spanning 5–161 (FFDVQFGGDA…TTIKIVDSGV (157 aa)) is the PPIase cyclophilin-type domain.

The protein belongs to the cyclophilin-type PPIase family. PPIase A subfamily.

It carries out the reaction [protein]-peptidylproline (omega=180) = [protein]-peptidylproline (omega=0). With respect to regulation, binds cyclosporin A (CsA). CsA mediates some of its effects via an inhibitory action on PPIase. Its function is as follows. PPIases accelerate the folding of proteins. It catalyzes the cis-trans isomerization of proline imidic peptide bonds in oligopeptides. The protein is Peptidyl-prolyl cis-trans isomerase of Paramecium primaurelia.